Here is a 444-residue protein sequence, read N- to C-terminus: Phosphoglucosamine mutase (444 aa).

Ser101 serves as the catalytic Phosphoserine intermediate. Ser101, Asp240, Asp242, and Asp244 together coordinate Mg(2+). Residue Ser101 is modified to Phosphoserine.

It belongs to the phosphohexose mutase family. Mg(2+) serves as cofactor. Post-translationally, activated by phosphorylation.

The catalysed reaction is alpha-D-glucosamine 1-phosphate = D-glucosamine 6-phosphate. In terms of biological role, catalyzes the conversion of glucosamine-6-phosphate to glucosamine-1-phosphate. This chain is Phosphoglucosamine mutase, found in Aeromonas hydrophila subsp. hydrophila (strain ATCC 7966 / DSM 30187 / BCRC 13018 / CCUG 14551 / JCM 1027 / KCTC 2358 / NCIMB 9240 / NCTC 8049).